The primary structure comprises 122 residues: Basic phospholipase A2 vipoxin B chain (122 aa).

7 cysteine pairs are disulfide-bonded: cysteine 26–cysteine 115, cysteine 28–cysteine 44, cysteine 43–cysteine 95, cysteine 49–cysteine 122, cysteine 50–cysteine 88, cysteine 57–cysteine 81, and cysteine 75–cysteine 86. 3 residues coordinate Ca(2+): tyrosine 27, glycine 29, and glycine 31. Histidine 47 is an active-site residue. Ca(2+) is bound at residue aspartate 48. Aspartate 89 is a catalytic residue.

This sequence belongs to the phospholipase A2 family. Group II subfamily. D49 sub-subfamily. Heterodimer of A (AC P04084) and B chains; non-covalently linked. The A chain (acidic) is non-toxic, and increases the toxicity of the B chain (basic). The A chain may act as factor stabilizing the complex structure and hence retaining its toxicity by preventing non-specific binding. Upon binding to the target membranes the A chain is postulated to dissociate. The cofactor is Ca(2+). As to expression, expressed by the venom gland.

It localises to the secreted. It carries out the reaction a 1,2-diacyl-sn-glycero-3-phosphocholine + H2O = a 1-acyl-sn-glycero-3-phosphocholine + a fatty acid + H(+). Heterodimer: postsynaptic neurotoxin. Functionally, monomer: snake venom phospholipase A2 (PLA2) that shows hemolytic activity and inhibition of platelet aggregation. The hemolytic activity occurs only in presence of fatty acids (unsaturated fatty acids facilitate induce a strong hemolytic activity, whereas saturated fatty acids induce a slight activity). The inhibition of platelet aggregation is almost maximal when aggregation is induced by collagen, and arachidonic acid, whereas it is only of 30% when the aggregation is induced by ADP. PLA2 catalyzes the calcium-dependent hydrolysis of the 2-acyl groups in 3-sn-phosphoglycerides. This chain is Basic phospholipase A2 vipoxin B chain, found in Vipera ammodytes meridionalis (Eastern sand viper).